The sequence spans 280 residues: Aspartate/glutamate leucyltransferase (280 aa).

The protein belongs to the R-transferase family. Bpt subfamily.

The protein localises to the cytoplasm. It carries out the reaction N-terminal L-glutamyl-[protein] + L-leucyl-tRNA(Leu) = N-terminal L-leucyl-L-glutamyl-[protein] + tRNA(Leu) + H(+). The enzyme catalyses N-terminal L-aspartyl-[protein] + L-leucyl-tRNA(Leu) = N-terminal L-leucyl-L-aspartyl-[protein] + tRNA(Leu) + H(+). Functionally, functions in the N-end rule pathway of protein degradation where it conjugates Leu from its aminoacyl-tRNA to the N-termini of proteins containing an N-terminal aspartate or glutamate. The chain is Aspartate/glutamate leucyltransferase from Cereibacter sphaeroides (strain KD131 / KCTC 12085) (Rhodobacter sphaeroides).